A 132-amino-acid polypeptide reads, in one-letter code: Protein NrdI (132 aa).

Belongs to the NrdI family.

In terms of biological role, probably involved in ribonucleotide reductase function. This chain is Protein NrdI, found in Staphylococcus epidermidis (strain ATCC 35984 / DSM 28319 / BCRC 17069 / CCUG 31568 / BM 3577 / RP62A).